A 521-amino-acid polypeptide reads, in one-letter code: Riboflavin transporter MCH5 (521 aa).

Disordered regions lie at residues 1–33 (MSSDSLTPKDTIVPEEQTNQLRQPDLDEDSIHY) and 65–96 (NKGTDIESQPHWGENTSSTHDSDKEEDSNEEI). Residues 1 to 103 (MSSDSLTPKD…EEIESFPEGG (103 aa)) lie on the Cytoplasmic side of the membrane. Residues 104–124 (FKAWVVTFGCFLGLIACFGLL) form a helical membrane-spanning segment. N125 carries N-linked (GlcNAc...) asparagine glycosylation. The Extracellular portion of the chain corresponds to 125-143 (NSTGVIESHLQDNQLSSES). A helical transmembrane segment spans residues 144 to 164 (VSTIGWLFSLFLFVCSASCII). Topologically, residues 165–172 (SGTYFDRN) are cytoplasmic. Residues 173–193 (GFRTIMIVGTVFHVAGLFATA) form a helical membrane-spanning segment. The N-linked (GlcNAc...) asparagine glycan is linked to N194. Over 194–200 (NSTKYWH) the chain is Extracellular. Residues 201 to 221 (FILSFAIVCGFGNGIVLSPLV) form a helical membrane-spanning segment. Topologically, residues 222 to 233 (SVPAHYFFKRRG) are cytoplasmic. Residues 234-254 (TALAMATIGGSVGGVVFPIML) form a helical membrane-spanning segment. Residues 255 to 269 (RSFFSMKSDTDPTYG) are Extracellular-facing. A helical membrane pass occupies residues 270–290 (FVWGIRTLGFLDLALLTLSII). Residues 291-325 (LVKERLPHVIENSKDGESRWRYILRVYILQCFDAK) are Cytoplasmic-facing. A helical transmembrane segment spans residues 326–346 (AFLDMKYLFCVLGTVFSELSI). The Extracellular segment spans residues 347 to 367 (NSALTYYGSYATSHGISANDA). Residues 368–388 (YTLIMIINVCGIPGRWVPGYL) traverse the membrane as a helical segment. At 389-396 (SDKFGRFN) the chain is on the cytoplasmic side. The helical transmembrane segment at 397 to 417 (VAIATLLTLFIVMFVGWLPFG) threads the bilayer. Residues 418 to 422 (TNLTN) are Extracellular-facing. Residue N419 is glycosylated (N-linked (GlcNAc...) asparagine). The chain crosses the membrane as a helical span at residues 423–443 (MYVISALYGFCSGSVFSLLPV). Residues 444–461 (CCGQISKTEEFGKRYSTM) are Cytoplasmic-facing. Residues 462–482 (YFVVGFGTLVGIPITGAIISI) form a helical membrane-spanning segment. Residues 483–487 (KTTAD) are Extracellular-facing. Residues 488-508 (YQHYIIFCGLATFVSAVCYII) traverse the membrane as a helical segment. At 509–521 (SRAYCVGFKWVRF) the chain is on the cytoplasmic side.

The protein belongs to the major facilitator superfamily. Monocarboxylate porter (TC 2.A.1.13) family.

It is found in the cell membrane. Riboflavin transporter involved in riboflavin (vitamin B2) uptake. Does not act in the transport of monocarboxylic acids across the plasma membrane. The protein is Riboflavin transporter MCH5 (MCH5) of Saccharomyces cerevisiae (strain ATCC 204508 / S288c) (Baker's yeast).